A 345-amino-acid chain; its full sequence is Microtubule-associated protein Jupiter (345 aa).

Positions M1–S14 are enriched in polar residues. The tract at residues M1–Q34 is disordered. Position 24 is a phosphoserine (S24). T35 carries the phosphothreonine modification. Over residues Q78–L87 the composition is skewed to basic and acidic residues. Positions Q78 to N100 are disordered. 2 positions are modified to phosphothreonine: T92 and T96. Phosphoserine occurs at positions 105, 134, and 145. Disordered regions lie at residues H127 to S241 and E300 to W345. Residues S132–S145 are compositionally biased toward low complexity. Over residues T146 to T164 the composition is skewed to polar residues. Positions L177–P191 are enriched in pro residues. 2 stretches are compositionally biased toward polar residues: residues D212–C226 and D315–G326.

This sequence belongs to the MAP Jupiter family.

The protein resides in the nucleus. The protein localises to the cytoplasm. Its subcellular location is the cytoskeleton. It localises to the spindle. In terms of biological role, binds to all microtubule populations. This chain is Microtubule-associated protein Jupiter, found in Drosophila erecta (Fruit fly).